Consider the following 209-residue polypeptide: Probable GTP-binding protein EngB (209 aa).

The 175-residue stretch at 24–198 (EGMEVAFAGR…HGILDQWLGL (175 aa)) folds into the EngB-type G domain. GTP-binding positions include 32–39 (GRSNAGKS), 59–63 (GRTQL), 77–80 (DLPG), 144–147 (TKAD), and 177–179 (FSA). Residues serine 39 and threonine 61 each coordinate Mg(2+).

This sequence belongs to the TRAFAC class TrmE-Era-EngA-EngB-Septin-like GTPase superfamily. EngB GTPase family. Mg(2+) is required as a cofactor.

In terms of biological role, necessary for normal cell division and for the maintenance of normal septation. This is Probable GTP-binding protein EngB from Thioalkalivibrio sulfidiphilus (strain HL-EbGR7).